A 387-amino-acid chain; its full sequence is Probable peptidoglycan glycosyltransferase FtsW (387 aa).

9 helical membrane-spanning segments follow: residues Leu20–Ala40, Leu61–Trp81, Pro86–Val106, Thr149–Leu169, Asp172–Ala192, Leu194–Tyr214, Leu284–Ile304, Gly322–Leu342, and Leu349–Ile369.

It belongs to the SEDS family. FtsW subfamily.

It localises to the cell inner membrane. It catalyses the reaction [GlcNAc-(1-&gt;4)-Mur2Ac(oyl-L-Ala-gamma-D-Glu-L-Lys-D-Ala-D-Ala)](n)-di-trans,octa-cis-undecaprenyl diphosphate + beta-D-GlcNAc-(1-&gt;4)-Mur2Ac(oyl-L-Ala-gamma-D-Glu-L-Lys-D-Ala-D-Ala)-di-trans,octa-cis-undecaprenyl diphosphate = [GlcNAc-(1-&gt;4)-Mur2Ac(oyl-L-Ala-gamma-D-Glu-L-Lys-D-Ala-D-Ala)](n+1)-di-trans,octa-cis-undecaprenyl diphosphate + di-trans,octa-cis-undecaprenyl diphosphate + H(+). It participates in cell wall biogenesis; peptidoglycan biosynthesis. Functionally, peptidoglycan polymerase that is essential for cell division. This Nitrosococcus halophilus (strain Nc4) protein is Probable peptidoglycan glycosyltransferase FtsW.